Here is a 117-residue protein sequence, read N- to C-terminus: Immunoglobulin lambda variable 1-44 (117 aa).

An N-terminal signal peptide occupies residues 1–19 (MASFPLLLTLLTHCAGSWA). Position 20 is a pyrrolidone carboxylic acid (Gln20). Residues 20–44 (QSVLTQPPSASGTPGQRVTISCSGS) form a framework-1 region. Residues 20–117 (QSVLTQPPSA…CAAWDDSLNG (98 aa)) form the Ig-like domain. Residues 24–35 (TQPPSASGTPGQ) are compositionally biased toward polar residues. Positions 24 to 45 (TQPPSASGTPGQRVTISCSGSS) are disordered. Cys41 and Cys108 are disulfide-bonded. A complementarity-determining-1 region spans residues 45–52 (SSNIGSNT). Residues 53–69 (VNWYQQLPGTAPKLLIY) form a framework-2 region. A complementarity-determining-2 region spans residues 70 to 72 (SNN). The framework-3 stretch occupies residues 73–108 (QRPSGVPDRFSGSKSGTSASLAISGLQSEDEADYYC). Residues 109–117 (AAWDDSLNG) are complementarity-determining-3.

Immunoglobulins are composed of two identical heavy chains and two identical light chains; disulfide-linked.

It is found in the secreted. The protein resides in the cell membrane. Functionally, v region of the variable domain of immunoglobulin light chains that participates in the antigen recognition. Immunoglobulins, also known as antibodies, are membrane-bound or secreted glycoproteins produced by B lymphocytes. In the recognition phase of humoral immunity, the membrane-bound immunoglobulins serve as receptors which, upon binding of a specific antigen, trigger the clonal expansion and differentiation of B lymphocytes into immunoglobulins-secreting plasma cells. Secreted immunoglobulins mediate the effector phase of humoral immunity, which results in the elimination of bound antigens. The antigen binding site is formed by the variable domain of one heavy chain, together with that of its associated light chain. Thus, each immunoglobulin has two antigen binding sites with remarkable affinity for a particular antigen. The variable domains are assembled by a process called V-(D)-J rearrangement and can then be subjected to somatic hypermutations which, after exposure to antigen and selection, allow affinity maturation for a particular antigen. This Homo sapiens (Human) protein is Immunoglobulin lambda variable 1-44.